The following is a 265-amino-acid chain: Phosphatidylglycerol--prolipoprotein diacylglyceryl transferase (265 aa).

A run of 4 helical transmembrane segments spans residues 17–37 (LSIR…WLLG), 56–76 (LVTY…MLFY), 92–112 (WQGG…VWFF), and 117–137 (GKGF…GLFA). Arginine 139 contributes to the a 1,2-diacyl-sn-glycero-3-phospho-(1'-sn-glycerol) binding site. The next 3 membrane-spanning stretches (helical) occupy residues 173-193 (PSQL…VWLY), 201-221 (GAVS…VELV), and 235-255 (WLTM…WLLA).

It belongs to the Lgt family.

The protein resides in the cell inner membrane. The catalysed reaction is L-cysteinyl-[prolipoprotein] + a 1,2-diacyl-sn-glycero-3-phospho-(1'-sn-glycerol) = an S-1,2-diacyl-sn-glyceryl-L-cysteinyl-[prolipoprotein] + sn-glycerol 1-phosphate + H(+). Its pathway is protein modification; lipoprotein biosynthesis (diacylglyceryl transfer). Its function is as follows. Catalyzes the transfer of the diacylglyceryl group from phosphatidylglycerol to the sulfhydryl group of the N-terminal cysteine of a prolipoprotein, the first step in the formation of mature lipoproteins. In Solidesulfovibrio magneticus (strain ATCC 700980 / DSM 13731 / RS-1) (Desulfovibrio magneticus), this protein is Phosphatidylglycerol--prolipoprotein diacylglyceryl transferase.